The primary structure comprises 565 residues: Periplasmic trehalase (565 aa).

The N-terminal stretch at 1-30 (MKSPAPSRPQKMALIPACIFLCFAALSVQA) is a signal peptide. Substrate-binding positions include Arg152, 159 to 160 (WD), Asn196, 205 to 207 (RSQ), 277 to 279 (RPE), and Gly310. Active-site proton donor/acceptor residues include Asp312 and Glu496. Glu511 contributes to the substrate binding site. Residues 539–565 (CDNVPATRPLSESTTQPVKPKEAEPTL) are disordered.

It belongs to the glycosyl hydrolase 37 family. As to quaternary structure, monomer.

It is found in the periplasm. The catalysed reaction is alpha,alpha-trehalose + H2O = alpha-D-glucose + beta-D-glucose. In terms of biological role, provides the cells with the ability to utilize trehalose at high osmolarity by splitting it into glucose molecules that can subsequently be taken up by the phosphotransferase-mediated uptake system. In Shigella dysenteriae serotype 1 (strain Sd197), this protein is Periplasmic trehalase.